A 626-amino-acid chain; its full sequence is Ankyrin repeat domain-containing protein 13B (626 aa).

Methionine 1 is subject to N-acetylmethionine. ANK repeat units lie at residues 47–76 and 80–109; these read RGRT…DVGR and SGWT…YQRV. Residues 442 to 470 are disordered; it reads PVPSVRGSPGSETPSPGSDSSSVSSSSST. Low complexity predominate over residues 448-470; that stretch reads GSPGSETPSPGSDSSSVSSSSST. Residues 503–522 enclose the UIM 1 domain; it reads EDDDLLRFAIQQSLLEAGSE. The tract at residues 534 to 614 is disordered; it reads NSKPGTHPMS…RRRVRQEEEE (81 aa). Positions 554–575 are enriched in pro residues; sequence PPTPQRQPMPPAPVPSPRPSPG. UIM domains lie at 585–604 and 610–626; these read SYDE…QEER and QEEE…LTEQ.

As to quaternary structure, interacts with EGFR (ubiquitinated); the interaction is direct and may regulate EGFR internalization.

The protein localises to the cell membrane. The protein resides in the late endosome. Its subcellular location is the early endosome. Its function is as follows. Ubiquitin-binding protein that specifically recognizes and binds 'Lys-63'-linked ubiquitin. Does not bind 'Lys-48'-linked ubiquitin. Positively regulates the internalization of ligand-activated EGFR by binding to the Ub moiety of ubiquitinated EGFR at the cell membrane. This is Ankyrin repeat domain-containing protein 13B (Ankrd13b) from Mus musculus (Mouse).